A 175-amino-acid chain; its full sequence is MIDDDGYRPNVGIVICNRQGQVLWARRFGQHSWQFPQGGINPGETAEQAMYRELFEEVGLNRKDVRILAATRNWLRYKLPKRLVRWDTKPVCIGQKQKWYLLQLMCNDADINMQTSSTPEFDGWRWVSYWYPVRQVVSFKRDVYRRVMKEFASVVMPLQESTTQRNTPGYRRKRG.

A Nudix hydrolase domain is found at 6–149; it reads GYRPNVGIVI…KRDVYRRVMK (144 aa). The short motif at 38–59 is the Nudix box element; it reads GGINPGETAEQAMYRELFEEVG.

It belongs to the Nudix hydrolase family. RppH subfamily. A divalent metal cation is required as a cofactor.

Functionally, accelerates the degradation of transcripts by removing pyrophosphate from the 5'-end of triphosphorylated RNA, leading to a more labile monophosphorylated state that can stimulate subsequent ribonuclease cleavage. The sequence is that of RNA pyrophosphohydrolase from Erwinia tasmaniensis (strain DSM 17950 / CFBP 7177 / CIP 109463 / NCPPB 4357 / Et1/99).